We begin with the raw amino-acid sequence, 137 residues long: Putative pre-16S rRNA nuclease (137 aa).

This sequence belongs to the YqgF nuclease family.

It localises to the cytoplasm. Could be a nuclease involved in processing of the 5'-end of pre-16S rRNA. The sequence is that of Putative pre-16S rRNA nuclease from Buchnera aphidicola subsp. Baizongia pistaciae (strain Bp).